Here is a 438-residue protein sequence, read N- to C-terminus: Rhomboid-related protein 1 (438 aa).

The segment at 1–62 (MGRVEDGGTT…PSQPGPALWS (62 aa)) is disordered. Over residues 8 to 17 (GTTEELEDWD) the composition is skewed to acidic residues. 7 helical membrane passes run 196 to 216 (PPVF…CYGA), 262 to 282 (GFNA…HGLL), 284 to 304 (ISLL…ITDM), 308 to 328 (VVGG…NVVM), 340 to 359 (LRMV…AVWL), 372 to 392 (PSFM…LTIL), and 405 to 425 (WWVV…WNVF). Serine 312 serves as the catalytic Nucleophile. The active site involves histidine 377.

The protein belongs to the peptidase S54 family. Detected in heart, brain, skeletal muscle and kidney.

The protein resides in the membrane. The enzyme catalyses Cleaves type-1 transmembrane domains using a catalytic dyad composed of serine and histidine that are contributed by different transmembrane domains.. In terms of biological role, may be involved in regulated intramembrane proteolysis and the subsequent release of functional polypeptides from their membrane anchors. The sequence is that of Rhomboid-related protein 1 (RHBDL1) from Homo sapiens (Human).